The chain runs to 230 residues: Demethylmenaquinone methyltransferase (230 aa).

S-adenosyl-L-methionine-binding positions include Thr-57, Asp-77, and Asp-101 to Ile-102.

It belongs to the class I-like SAM-binding methyltransferase superfamily. MenG/UbiE family.

The catalysed reaction is a 2-demethylmenaquinol + S-adenosyl-L-methionine = a menaquinol + S-adenosyl-L-homocysteine + H(+). It functions in the pathway quinol/quinone metabolism; menaquinone biosynthesis; menaquinol from 1,4-dihydroxy-2-naphthoate: step 2/2. In terms of biological role, methyltransferase required for the conversion of demethylmenaquinol (DMKH2) to menaquinol (MKH2). The polypeptide is Demethylmenaquinone methyltransferase (Chlamydia pneumoniae (Chlamydophila pneumoniae)).